Consider the following 88-residue polypeptide: MANIKSAKKRISVIEKKTALNRVRKSQIKTAIRRFEDAVAAGNREDAVAKFQYAQKRIYQVASKGTIHKNAAARKVAKLAQKLNGMNA.

It belongs to the bacterial ribosomal protein bS20 family.

Its function is as follows. Binds directly to 16S ribosomal RNA. This is Small ribosomal subunit protein bS20 from Clostridioides difficile (strain 630) (Peptoclostridium difficile).